A 360-amino-acid polypeptide reads, in one-letter code: Phenylalanine--tRNA ligase alpha subunit (360 aa).

Residue E260 participates in Mg(2+) binding.

This sequence belongs to the class-II aminoacyl-tRNA synthetase family. Phe-tRNA synthetase alpha subunit type 1 subfamily. As to quaternary structure, tetramer of two alpha and two beta subunits. Mg(2+) serves as cofactor.

Its subcellular location is the cytoplasm. The enzyme catalyses tRNA(Phe) + L-phenylalanine + ATP = L-phenylalanyl-tRNA(Phe) + AMP + diphosphate + H(+). This chain is Phenylalanine--tRNA ligase alpha subunit, found in Rhizobium rhizogenes (strain K84 / ATCC BAA-868) (Agrobacterium radiobacter).